Here is a 519-residue protein sequence, read N- to C-terminus: Ribonuclease Y 1 (519 aa).

Residues 2 to 22 (IILYIILAIIAIVVGYCAGFF) form a helical membrane-spanning segment. The interval 84–113 (QKQEDRLLQREDSLDRKDNSFEKRENSLER) is disordered. Positions 209-294 (TITVVSLPND…EMVEKAKKEM (86 aa)) constitute a KH domain. The region spanning 335–428 (VLNHSIEVAN…VAAANSISAA (94 aa)) is the HD domain.

Belongs to the RNase Y family.

It is found in the cell membrane. Endoribonuclease that initiates mRNA decay. The protein is Ribonuclease Y 1 of Pediococcus pentosaceus (strain ATCC 25745 / CCUG 21536 / LMG 10740 / 183-1w).